Consider the following 351-residue polypeptide: Lipopolysaccharide core biosynthesis mannosyltransferase LpsB (351 aa).

It belongs to the glycosyltransferase group 1 family. Glycosyltransferase 4 subfamily.

The protein operates within bacterial outer membrane biogenesis; LPS core biosynthesis. Acts at transfer of mannose group to a 3-deoxy-D-mono octulonic acid (KDO) via an alpha-1,5 linkage. This chain is Lipopolysaccharide core biosynthesis mannosyltransferase LpsB (lpsB), found in Rhizobium meliloti (strain 1021) (Ensifer meliloti).